We begin with the raw amino-acid sequence, 270 residues long: Centromere protein Q (270 aa).

A disordered region spans residues 1–59; it reads MSGKANTSKKKSQRVKRNVKQRADKEDEELDSPENKVGNRAKRNRSHAGHLSSKEQTKC. Basic residues-rich tracts occupy residues 7–20 and 39–48; these read TSKK…RNVK and NRAKRNRSHA. Ser-52 is subject to Phosphoserine. The stretch at 143 to 205 forms a coiled coil; sequence LKVEREQERA…EEEMKEVFHI (63 aa).

This sequence belongs to the CENP-Q/OKP1 family. Component of the CENPA-CAD complex, composed of CENPI, CENPK, CENPL, CENPO, CENPP, CENPQ, CENPR and CENPS. The CENPA-CAD complex interacts with the CENPA-NAC complex, at least composed of CENPA, CENPC, CENPH, CENPM, CENPN, CENPT and CENPU. Post-translationally, phosphorylation at Ser-52 is essential for CENPE recruitment to kinetochores and orderly chromosome congression.

It is found in the nucleus. The protein localises to the chromosome. Its subcellular location is the centromere. In terms of biological role, component of the CENPA-CAD (nucleosome distal) complex, a complex recruited to centromeres which is involved in assembly of kinetochore proteins, mitotic progression and chromosome segregation. May be involved in incorporation of newly synthesized CENPA into centromeres via its interaction with the CENPA-NAC complex. Plays an important role in chromosome congression and in the recruitment of CENP-O complex (which comprises CENPO, CENPP, CENPQ and CENPU), CENPE and PLK1 to the kinetochores. This Rattus norvegicus (Rat) protein is Centromere protein Q (Cenpq).